The primary structure comprises 400 residues: Bifunctional enzyme IspD/IspF (400 aa).

Residues 1-244 (MSHRVLGTER…LLKERDKMDI (244 aa)) are 2-C-methyl-D-erythritol 4-phosphate cytidylyltransferase. The tract at residues 245 to 400 (RTGNGYDVHR…ALATVTLVRT (156 aa)) is 2-C-methyl-D-erythritol 2,4-cyclodiphosphate synthase. Asp251 and His253 together coordinate a divalent metal cation. 4-CDP-2-C-methyl-D-erythritol 2-phosphate contacts are provided by residues 251 to 253 (DVH) and 277 to 278 (HS). Residue His285 participates in a divalent metal cation binding. 4-CDP-2-C-methyl-D-erythritol 2-phosphate-binding positions include 299-301 (DIG), 375-378 (TTSE), Phe382, and Arg385.

This sequence in the N-terminal section; belongs to the IspD/TarI cytidylyltransferase family. IspD subfamily. The protein in the C-terminal section; belongs to the IspF family. It depends on a divalent metal cation as a cofactor.

It carries out the reaction 2-C-methyl-D-erythritol 4-phosphate + CTP + H(+) = 4-CDP-2-C-methyl-D-erythritol + diphosphate. The catalysed reaction is 4-CDP-2-C-methyl-D-erythritol 2-phosphate = 2-C-methyl-D-erythritol 2,4-cyclic diphosphate + CMP. The protein operates within isoprenoid biosynthesis; isopentenyl diphosphate biosynthesis via DXP pathway; isopentenyl diphosphate from 1-deoxy-D-xylulose 5-phosphate: step 2/6. It participates in isoprenoid biosynthesis; isopentenyl diphosphate biosynthesis via DXP pathway; isopentenyl diphosphate from 1-deoxy-D-xylulose 5-phosphate: step 4/6. Bifunctional enzyme that catalyzes the formation of 4-diphosphocytidyl-2-C-methyl-D-erythritol from CTP and 2-C-methyl-D-erythritol 4-phosphate (MEP) (IspD), and catalyzes the conversion of 4-diphosphocytidyl-2-C-methyl-D-erythritol 2-phosphate (CDP-ME2P) to 2-C-methyl-D-erythritol 2,4-cyclodiphosphate (ME-CPP) with a corresponding release of cytidine 5-monophosphate (CMP) (IspF). The polypeptide is Bifunctional enzyme IspD/IspF (Dinoroseobacter shibae (strain DSM 16493 / NCIMB 14021 / DFL 12)).